Here is a 545-residue protein sequence, read N- to C-terminus: Capsular polysaccharide phosphotransferase SacB (545 aa).

This sequence belongs to the stealth family.

Its function is as follows. May be the polymerase that links individual UDP-N-acetyl-D-mannosamine monomers. In serotype A the capsule is composed of repeated units of (alpha 1-6)-linked N-acetyl-D-mannosamine-1-phosphate. This is Capsular polysaccharide phosphotransferase SacB (sacB) from Neisseria meningitidis serogroup A.